The chain runs to 155 residues: Ribosomal RNA large subunit methyltransferase H (155 aa).

Residues glycine 104 and 123-128 (LSRLTL) each bind S-adenosyl-L-methionine.

The protein belongs to the RNA methyltransferase RlmH family. In terms of assembly, homodimer.

The protein localises to the cytoplasm. It catalyses the reaction pseudouridine(1915) in 23S rRNA + S-adenosyl-L-methionine = N(3)-methylpseudouridine(1915) in 23S rRNA + S-adenosyl-L-homocysteine + H(+). Specifically methylates the pseudouridine at position 1915 (m3Psi1915) in 23S rRNA. The polypeptide is Ribosomal RNA large subunit methyltransferase H (Marinomonas sp. (strain MWYL1)).